The following is a 106-amino-acid chain: Insulin-2 (106 aa).

A signal peptide spans Met1 to Ala23. 3 disulfide bridges follow: Cys30–Cys92, Cys42–Cys105, and Cys91–Cys96. Positions Asp56 to Met83 are cleaved as a propeptide — c peptide.

This sequence belongs to the insulin family. Heterodimer of a B chain and an A chain linked by two disulfide bonds.

It is found in the secreted. Functionally, insulin decreases blood glucose concentration. It increases cell permeability to monosaccharides, amino acids and fatty acids. It accelerates glycolysis, the pentose phosphate cycle, and glycogen synthesis in liver. In Xenopus laevis (African clawed frog), this protein is Insulin-2 (ins-b).